The primary structure comprises 437 residues: Nuclear hormone receptor family member nhr-100 (437 aa).

Positions 21–96 (DTSCLVCGDP…VGMDANAVRS (76 aa)) form a DNA-binding region, nuclear receptor. NR C4-type zinc fingers lie at residues 24–44 (CLVCGDPHGKRHYGAMSCNGC) and 60–79 (CSFNNECIIEFKYRNRCRAC). One can recognise an NR LBD domain in the interval 141–409 (QTKEIIAHML…SGGGLPYDIH (269 aa)).

It belongs to the nuclear hormone receptor family.

The protein localises to the nucleus. Its function is as follows. Orphan nuclear receptor. This chain is Nuclear hormone receptor family member nhr-100 (nhr-100), found in Caenorhabditis elegans.